Here is an 811-residue protein sequence, read N- to C-terminus: Glycerol-3-phosphate acyltransferase (811 aa).

Residues 303–308 carry the HXXXXD motif motif; it reads HRSHMD.

It belongs to the GPAT/DAPAT family.

The protein localises to the cell inner membrane. It catalyses the reaction sn-glycerol 3-phosphate + an acyl-CoA = a 1-acyl-sn-glycero-3-phosphate + CoA. It participates in phospholipid metabolism; CDP-diacylglycerol biosynthesis; CDP-diacylglycerol from sn-glycerol 3-phosphate: step 1/3. The protein is Glycerol-3-phosphate acyltransferase of Haemophilus ducreyi (strain 35000HP / ATCC 700724).